The following is a 357-amino-acid chain: N-acetyl-gamma-glutamyl-phosphate reductase (357 aa).

The active site involves Cys-160.

It belongs to the NAGSA dehydrogenase family. Type 1 subfamily.

It is found in the cytoplasm. It carries out the reaction N-acetyl-L-glutamate 5-semialdehyde + phosphate + NADP(+) = N-acetyl-L-glutamyl 5-phosphate + NADPH + H(+). Its pathway is amino-acid biosynthesis; L-arginine biosynthesis; N(2)-acetyl-L-ornithine from L-glutamate: step 3/4. Catalyzes the NADPH-dependent reduction of N-acetyl-5-glutamyl phosphate to yield N-acetyl-L-glutamate 5-semialdehyde. The protein is N-acetyl-gamma-glutamyl-phosphate reductase of Synechococcus sp. (strain CC9605).